We begin with the raw amino-acid sequence, 1072 residues long: Vacuolar membrane protease (1072 aa).

Residues 1-9 (MINPISFRP) are Cytoplasmic-facing. The chain crosses the membrane as a helical span at residues 10-30 (GPVTFWTTLIYLALLIPIVII). At 31 to 404 (NEKTPAAPKT…SFVLFGLRGM (374 aa)) the chain is on the vacuolar side. Residues N48, N116, N119, and N128 are each glycosylated (N-linked (GlcNAc...) asparagine). Zn(2+) contacts are provided by H185 and D197. The Proton acceptor role is filled by E231. Residues E232, E257, and H330 each coordinate Zn(2+). The chain crosses the membrane as a helical span at residues 405 to 425 (FAWSLTLLIATPLVLVGITWL). At 426–457 (LRNLDKDYFFTSTVKTKEHPEYEAVPIGGWKG) the chain is on the cytoplasmic side. The chain crosses the membrane as a helical span at residues 458–478 (FFRFPFALGVAVFFTISSALL). Residues 479–492 (MNKVNPLIVYSSRY) are Vacuolar-facing. The chain crosses the membrane as a helical span at residues 493-513 (SVWVMMVSIFYFSFWMIMRGA). The Cytoplasmic portion of the chain corresponds to 514 to 523 (NFVRPSALHR). The helical transmembrane segment at 524-544 (GYANLWLFVFGWIVLVAVTAL) threads the bilayer. The Vacuolar portion of the chain corresponds to 545–554 (EDRRRIAAGY). A helical transmembrane segment spans residues 555–575 (IFVFLESAIFLSCLISFVELL). Residues 576 to 747 (AVPRKSSYAL…YDHEQEWSGH (172 aa)) are Cytoplasmic-facing. The segment at 593–713 (GQEHDHNGYQ…GTNDRGRTTF (121 aa)) is disordered. Basic and acidic residues predominate over residues 606–617 (DSTDEPSLRARA). The segment covering 643-661 (GTTNGLSTAPSVAAHSSQP) has biased composition (polar residues). The helical transmembrane segment at 748–768 (LPSWAWFFQFLLLGPFMIILA) threads the bilayer. Residues 769-789 (AQTGLMLTDAVYQTGSDGSKL) lie on the Vacuolar side of the membrane. A helical membrane pass occupies residues 790-810 (ITPYLIIFVFTVLLILPLTPF). The Cytoplasmic segment spans residues 811–817 (IHRVTHH). Residues 818 to 838 (IPVFLLVVFIVTLTYNLIAFP) traverse the membrane as a helical segment. Over 839-1072 (FSANNRYKTF…VEGRKAFKIV (234 aa)) the chain is Vacuolar. Residues N932 and N974 are each glycosylated (N-linked (GlcNAc...) asparagine).

Belongs to the peptidase M28 family. Requires Zn(2+) as cofactor.

The protein localises to the vacuole membrane. May be involved in vacuolar sorting and osmoregulation. This chain is Vacuolar membrane protease, found in Neurospora crassa (strain ATCC 24698 / 74-OR23-1A / CBS 708.71 / DSM 1257 / FGSC 987).